The primary structure comprises 540 residues: Protein dml-1 (540 aa).

Residues 517-540 form a disordered region; it reads NELAEMADEYHEGWSSGSDDGDDD.

This sequence belongs to the misato family.

It localises to the mitochondrion. Functionally, involved in the partitioning of the mitochondrial organelle and mitochondrial DNA (mtDNA) inheritance. The chain is Protein dml-1 (dml-1) from Neurospora crassa (strain ATCC 24698 / 74-OR23-1A / CBS 708.71 / DSM 1257 / FGSC 987).